Reading from the N-terminus, the 406-residue chain is Argininosuccinate synthase (406 aa).

ATP-binding positions include 13–21 and Ala-40; that span reads AYSGGLDTS. Residues Tyr-91 and Ser-96 each contribute to the L-citrulline site. Gly-121 serves as a coordination point for ATP. Thr-123, Asn-127, and Asp-128 together coordinate L-aspartate. Asn-127 provides a ligand contact to L-citrulline. The L-citrulline site is built by Arg-131, Ser-180, Ser-189, Glu-265, and Tyr-277.

It belongs to the argininosuccinate synthase family. Type 1 subfamily. Homotetramer.

The protein resides in the cytoplasm. It carries out the reaction L-citrulline + L-aspartate + ATP = 2-(N(omega)-L-arginino)succinate + AMP + diphosphate + H(+). Its pathway is amino-acid biosynthesis; L-arginine biosynthesis; L-arginine from L-ornithine and carbamoyl phosphate: step 2/3. The chain is Argininosuccinate synthase from Syntrophotalea carbinolica (strain DSM 2380 / NBRC 103641 / GraBd1) (Pelobacter carbinolicus).